The following is a 138-amino-acid chain: Transcription antitermination protein NusB (138 aa).

This sequence belongs to the NusB family.

In terms of biological role, involved in transcription antitermination. Required for transcription of ribosomal RNA (rRNA) genes. Binds specifically to the boxA antiterminator sequence of the ribosomal RNA (rrn) operons. The sequence is that of Transcription antitermination protein NusB from Leptospira interrogans serogroup Icterohaemorrhagiae serovar copenhageni (strain Fiocruz L1-130).